Here is a 448-residue protein sequence, read N- to C-terminus: Divalent metal cation transporter MntH (448 aa).

Helical transmembrane passes span 41–61 (LFAFMGPGALIAVGYVDPGNW), 69–89 (SEFGYTLLSVILISNILAVLL), 117–137 (GFVLWILAELAIIATDIAEVI), 147–167 (FGIPLIWGVCITALDIFLVLF), 176–196 (IEVIVITLMVTILVCFGAEMV), 215–235 (IVTNPAMLYIALGILGATVMP), 270–290 (FSLTIALLINASILILAAAAF), 307–327 (LLNPTLGSSIASTVFAVALLA), 363–383 (VLAIVPAVIITALYGANGINE), 384–404 (LLIFSQVILSMQLSFAVIPLV), and 424–444 (IISWAVAIFIAILNIYLLFYT).

It belongs to the NRAMP family.

The protein localises to the cell membrane. Functionally, h(+)-stimulated, divalent metal cation uptake system. This Listeria welshimeri serovar 6b (strain ATCC 35897 / DSM 20650 / CCUG 15529 / CIP 8149 / NCTC 11857 / SLCC 5334 / V8) protein is Divalent metal cation transporter MntH.